We begin with the raw amino-acid sequence, 163 residues long: PTS system fructose-specific EIIB component (163 aa).

The 163-residue stretch at 1-163 folds into the PTS EIIB type-4 domain; sequence MMNIVLARID…FVQILRNVTK (163 aa). His15 acts as the Pros-phosphohistidine intermediate in catalysis. The residue at position 15 (His15) is a Phosphohistidine; by EIIA.

Its subcellular location is the cytoplasm. The enzyme catalyses D-fructose(out) + N(pros)-phospho-L-histidyl-[protein] = D-fructose 1-phosphate(in) + L-histidyl-[protein]. Its function is as follows. The phosphoenolpyruvate-dependent sugar phosphotransferase system (sugar PTS), a major carbohydrate active -transport system, catalyzes the phosphorylation of incoming sugar substrates concomitantly with their translocation across the cell membrane. The enzyme II LevDE PTS system is involved in fructose transport. Functionally, levD and LevE act as negative regulators of the levanase operon. They may be involved in a PTS-mediated phosphorylation of a regulator. The chain is PTS system fructose-specific EIIB component from Bacillus subtilis (strain 168).